A 387-amino-acid chain; its full sequence is Patatin group A-3 (387 aa).

A signal peptide spans 1 to 23 (MATTKSFLILIVMILATTSSTFA). In terms of domain architecture, PNPLA spans 32-230 (LSIDGGGVKG…TVADPALLSV (199 aa)). A GXGXXG motif is present at residues 36–41 (GGGVKG). The short motif at 75–79 (GTSTG) is the GXSXG element. The Nucleophile role is filled by S77. A glycan (N-linked (GlcNAc...) asparagine) is linked at N115. D216 functions as the Proton acceptor in the catalytic mechanism. The DGA/G signature appears at 216–218 (DGA). The stretch at 361-385 (ETYEEALKRFAKLLSDRKKLRANKA) forms a coiled coil.

This sequence belongs to the patatin family. Tuber and stolon.

Its subcellular location is the vacuole. In terms of biological role, probable lipolytic acyl hydrolase (LAH), an activity which is thought to be involved in the response of tubers to pathogens. In Solanum tuberosum (Potato), this protein is Patatin group A-3.